The sequence spans 336 residues: Protein RecA (336 aa).

66–73 is an ATP binding site; that stretch reads GNESSGKT.

The protein belongs to the RecA family.

The protein resides in the cytoplasm. Its function is as follows. Can catalyze the hydrolysis of ATP in the presence of single-stranded DNA, the ATP-dependent uptake of single-stranded DNA by duplex DNA, and the ATP-dependent hybridization of homologous single-stranded DNAs. It interacts with LexA causing its activation and leading to its autocatalytic cleavage. This Mycoplasma pneumoniae (strain ATCC 29342 / M129 / Subtype 1) (Mycoplasmoides pneumoniae) protein is Protein RecA.